Reading from the N-terminus, the 77-residue chain is Large ribosomal subunit protein uL24 (77 aa).

Belongs to the universal ribosomal protein uL24 family. In terms of assembly, part of the 50S ribosomal subunit.

In terms of biological role, one of two assembly initiator proteins, it binds directly to the 5'-end of the 23S rRNA, where it nucleates assembly of the 50S subunit. Its function is as follows. One of the proteins that surrounds the polypeptide exit tunnel on the outside of the subunit. This is Large ribosomal subunit protein uL24 from Sulfurovum sp. (strain NBC37-1).